Consider the following 481-residue polypeptide: Ribulose bisphosphate carboxylase large chain (481 aa).

Positions 1-2 (MS) are excised as a propeptide. P3 carries the N-acetylproline modification. At K14 the chain carries N6,N6,N6-trimethyllysine. Residues N123 and T173 each contribute to the substrate site. The active-site Proton acceptor is the K175. K177 serves as a coordination point for substrate. Mg(2+)-binding residues include K201, D203, and E204. Position 201 is an N6-carboxylysine (K201). H294 functions as the Proton acceptor in the catalytic mechanism. Residues R295, H327, and S379 each contribute to the substrate site.

This sequence belongs to the RuBisCO large chain family. Type I subfamily. As to quaternary structure, heterohexadecamer of 8 large chains and 8 small chains; disulfide-linked. The disulfide link is formed within the large subunit homodimers. Requires Mg(2+) as cofactor. Post-translationally, the disulfide bond which can form in the large chain dimeric partners within the hexadecamer appears to be associated with oxidative stress and protein turnover.

The protein resides in the plastid. It is found in the chloroplast. The catalysed reaction is 2 (2R)-3-phosphoglycerate + 2 H(+) = D-ribulose 1,5-bisphosphate + CO2 + H2O. The enzyme catalyses D-ribulose 1,5-bisphosphate + O2 = 2-phosphoglycolate + (2R)-3-phosphoglycerate + 2 H(+). Its function is as follows. RuBisCO catalyzes two reactions: the carboxylation of D-ribulose 1,5-bisphosphate, the primary event in carbon dioxide fixation, as well as the oxidative fragmentation of the pentose substrate in the photorespiration process. Both reactions occur simultaneously and in competition at the same active site. The protein is Ribulose bisphosphate carboxylase large chain of Coffea arabica (Arabian coffee).